The chain runs to 875 residues: DNA mismatch repair protein MutS (875 aa).

625-632 serves as a coordination point for ATP; it reads GPNMGGKS.

This sequence belongs to the DNA mismatch repair MutS family.

Its function is as follows. This protein is involved in the repair of mismatches in DNA. It is possible that it carries out the mismatch recognition step. This protein has a weak ATPase activity. This Symbiobacterium thermophilum (strain DSM 24528 / JCM 14929 / IAM 14863 / T) protein is DNA mismatch repair protein MutS.